Consider the following 109-residue polypeptide: ATPase inhibitor mai-2, mitochondrial (109 aa).

Disordered regions lie at residues 18–39 and 73–109; these read FSAGGHGDGAGRGGGSGGSIRD and EEVKHHEGQLENHKKVLERHQQRISEIEAQERALGKE. Positions 21–35 are enriched in gly residues; it reads GGHGDGAGRGGGSGG. Residues 55–109 are a coiled coil; it reads YFYKKQKAQLQELREHIQEEVKHHEGQLENHKKVLERHQQRISEIEAQERALGKE.

It belongs to the ATPase inhibitor family.

It is found in the mitochondrion. Thought to be a regulatory component of the ATP-synthesizing complex in the mitochondria. Activity is pH dependent. The protein is ATPase inhibitor mai-2, mitochondrial (mai-2) of Caenorhabditis elegans.